Reading from the N-terminus, the 77-residue chain is Spermatid-specific protein T2 (77 aa).

Residues 1-21 form a hydrophobic region; it reads MKVAANTSKMLVEKLDLLKGG. The interval 1-77 is disordered; sequence MKVAANTSKM…YSRRRYRRRR (77 aa). A compositionally biased stretch (basic residues) spans 20–77; the sequence is GGRRRRRRSRRRRRSRRRRSRSPYRRRYRRRRRRRRSRRRRRYRRRRSYSRRRYRRRR.

Phosphorylation occurs at different degrees. The triphosphorylated form may be predominant in T2. SP2 appears to be phosphorylated in elongated spermatids, but dephosphorylated in mature sperm cells. In terms of tissue distribution, testis.

The protein localises to the nucleus. It localises to the chromosome. Cuttlefish spermiogenesis is characterized by a double nuclear protein transition: histones -&gt; spermatid-specific proteins (T1/T2) -&gt; protamines (SP1/SP2). The protamines compact sperm DNA into a highly condensed, stable and inactive complex. The polypeptide is Spermatid-specific protein T2 (Sepia officinalis (Common cuttlefish)).